The primary structure comprises 270 residues: MAFYRTNLPTRELFSLVSVVIVLLATNINSVQALSFNFTKLTTANSGVTFQGDAQILPSGLIALTKSSPFPPGQYFTTVGRALSSNLVPLWDSATGKAASFVTSFSFVIDTTEGPITDGLIFFIAPPGTVIPQNSTTPFLGVVDSETSINRFVGLEFDLYRNSWDPEGRHIGIDINSIISTKTVTYNLVSGSLTKVIIIYDSPSSTLSAAIIYENGKISTISQVIDLKTVLPNTVQIGLSAATLTGESYSIHSWSFVSDLETTASYVSNI.

An N-terminal signal peptide occupies residues 1-33; that stretch reads MAFYRTNLPTRELFSLVSVVIVLLATNINSVQA. The propeptide occupies 34–41; sequence LSFNFTKL. Asparagine 134 is a glycosylation site (N-linked (GlcNAc...) asparagine).

This sequence belongs to the leguminous lectin family. Post-translationally, glycosylated in a boron-dependent manner. Glycosylation is required for localization to symbiosomes. 3 different glycosylation variants, NLEC-1A, NLEC-1B and NLEC-1C, have been identified. Expressed in nodules of Rhizobium-infected and uninfected roots and in the root stele near the nodule attachment point. In roots which have been colonized by the endomycorrhizal fungus G.versiforme, detected only in cortical cells colonized by the fungus, mainly those containing arbuscules.

Its subcellular location is the symbiosome. The protein localises to the peribacteroid space. It is found in the peribacteroid membrane. Its function is as follows. Involved in symbiosome development. This Pisum sativum (Garden pea) protein is Nodule lectin (NLEC1).